A 296-amino-acid polypeptide reads, in one-letter code: Cytidine deaminase (296 aa).

2 CMP/dCMP-type deaminase domains span residues 47–167 (TESE…FGPK) and 186–296 (DSSD…VDPI). 88–90 (NLE) is a binding site for substrate. H101 is a Zn(2+) binding site. E103 serves as the catalytic Proton donor. C128 and C131 together coordinate Zn(2+).

The protein belongs to the cytidine and deoxycytidylate deaminase family. As to quaternary structure, homodimer. Zn(2+) serves as cofactor.

It catalyses the reaction cytidine + H2O + H(+) = uridine + NH4(+). It carries out the reaction 2'-deoxycytidine + H2O + H(+) = 2'-deoxyuridine + NH4(+). Functionally, this enzyme scavenges exogenous and endogenous cytidine and 2'-deoxycytidine for UMP synthesis. This is Cytidine deaminase from Shewanella oneidensis (strain ATCC 700550 / JCM 31522 / CIP 106686 / LMG 19005 / NCIMB 14063 / MR-1).